Here is a 78-residue protein sequence, read N- to C-terminus: RNA-binding protein Hfq (78 aa).

The region spanning Asp10–Val69 is the Sm domain.

Belongs to the Hfq family. In terms of assembly, homohexamer.

RNA chaperone that binds small regulatory RNA (sRNAs) and mRNAs to facilitate mRNA translational regulation in response to envelope stress, environmental stress and changes in metabolite concentrations. Also binds with high specificity to tRNAs. The sequence is that of RNA-binding protein Hfq from Herminiimonas arsenicoxydans.